Reading from the N-terminus, the 152-residue chain is Aspartate-rich protein (152 aa).

An N-terminal signal peptide occupies residues 1-19 (MQKLLLAVLFFSLLAVATA). Positions 82 to 113 (ATPKTEAEPGSLDKGEGTKGEKGKEGKKEKGE) are enriched in basic and acidic residues. A disordered region spans residues 82–152 (ATPKTEAEPG…VHENDDENED (71 aa)). Residues 135–152 (DDDDDRDDVHENDDENED) are compositionally biased toward acidic residues.

Prismatic layer of shell (at protein level). Expressed primarily in the mantle with highest level in the mantle edge and lower level in the mantle pallium.

The protein resides in the secreted. The sequence is that of Aspartate-rich protein from Margaritifera margaritifera (Freshwater pearl mussel).